The chain runs to 420 residues: Multifunctional CCA protein (420 aa).

The ATP site is built by glycine 8 and arginine 11. CTP contacts are provided by glycine 8 and arginine 11. Residues aspartate 21 and aspartate 23 each contribute to the Mg(2+) site. 3 residues coordinate ATP: arginine 91, arginine 137, and arginine 140. 3 residues coordinate CTP: arginine 91, arginine 137, and arginine 140. Residues 228–334 (TFVHTMLVLQ…LKLFNRLDVW (107 aa)) form the HD domain.

It belongs to the tRNA nucleotidyltransferase/poly(A) polymerase family. Bacterial CCA-adding enzyme type 1 subfamily. In terms of assembly, monomer. Can also form homodimers and oligomers. Mg(2+) serves as cofactor. It depends on Ni(2+) as a cofactor.

It carries out the reaction a tRNA precursor + 2 CTP + ATP = a tRNA with a 3' CCA end + 3 diphosphate. The catalysed reaction is a tRNA with a 3' CCA end + 2 CTP + ATP = a tRNA with a 3' CCACCA end + 3 diphosphate. Functionally, catalyzes the addition and repair of the essential 3'-terminal CCA sequence in tRNAs without using a nucleic acid template. Adds these three nucleotides in the order of C, C, and A to the tRNA nucleotide-73, using CTP and ATP as substrates and producing inorganic pyrophosphate. tRNA 3'-terminal CCA addition is required both for tRNA processing and repair. Also involved in tRNA surveillance by mediating tandem CCA addition to generate a CCACCA at the 3' terminus of unstable tRNAs. While stable tRNAs receive only 3'-terminal CCA, unstable tRNAs are marked with CCACCA and rapidly degraded. This is Multifunctional CCA protein from Pasteurella multocida (strain Pm70).